A 111-amino-acid chain; its full sequence is BET1-like protein (111 aa).

Residues 1–86 lie on the Cytoplasmic side of the membrane; the sequence is MADWARAQSP…MARSGRDNRK (86 aa). Phosphoserine is present on residues S9 and S37. The t-SNARE coiled-coil homology domain maps to 15–77; that stretch reads EILDRENKRM…TGSVKRFSTM (63 aa). A helical; Anchor for type IV membrane protein membrane pass occupies residues 87–107; that stretch reads LLCGVAVGLIVAFFILSYLLS. Over 108-111 the chain is Lumenal; it reads RART.

Component of a SNARE complex consisting of STX5, YKT6, GOSR1 and BET1L. Interacts with STX5.

The protein localises to the golgi apparatus membrane. It is found in the golgi apparatus. The protein resides in the trans-Golgi network membrane. Its function is as follows. Vesicle SNARE required for targeting and fusion of retrograde transport vesicles with the Golgi complex. Required for the integrity of the Golgi complex. This Bos taurus (Bovine) protein is BET1-like protein.